A 297-amino-acid polypeptide reads, in one-letter code: MAAARPDPPIPSSPTRESPSPEPPDLVLVPDGRPVTPPGDLIEIQVVKVTDTTSVPEPPEPGSFHCALCPAAFRLVSELLFHEHGHLASMEGLGQDGDPSRCHVCGHSCPGPASLRAHYSLHTGERPYRCSLCPRAFKALAPLLRHQHRHGVEPGTSERLLPTTTTGQPNSRVAQERSEVVMAAAAAGAVVGKPFACRFCAKPFRRSSDMRDHERVHTGERPYHCSICGKGFTQSSVLSGHARIHTGERPFRCMLCDRTFNNSSNFRKHQRTHFHGPGSGVGESRGQLRSSSVSQES.

The span at 1-12 (MAAARPDPPIPS) shows a compositional bias: pro residues. The tract at residues 1–39 (MAAARPDPPIPSSPTRESPSPEPPDLVLVPDGRPVTPPG) is disordered. A Phosphoserine modification is found at Ser-13. 3 consecutive C2H2-type zinc fingers follow at residues 64-86 (FHCALCPAAFRLVSELLFHEHGH), 100-122 (SRCHVCGHSCPGPASLRAHYSLH), and 128-150 (YRCSLCPRAFKALAPLLRHQHRH). Positions 149 to 175 (RHGVEPGTSERLLPTTTTGQPNSRVAQ) are disordered. Over residues 162 to 173 (PTTTTGQPNSRV) the composition is skewed to polar residues. 3 C2H2-type zinc fingers span residues 195–217 (FACRFCAKPFRRSSDMRDHERVH), 223–245 (YHCSICGKGFTQSSVLSGHARIH), and 251–273 (FRCMLCDRTFNNSSNFRKHQRTH). Residues 268 to 297 (KHQRTHFHGPGSGVGESRGQLRSSSVSQES) are disordered. Polar residues predominate over residues 287 to 297 (QLRSSSVSQES).

This sequence belongs to the krueppel C2H2-type zinc-finger protein family.

It localises to the nucleus. In terms of biological role, may be involved in transcriptional regulation. In Mus musculus (Mouse), this protein is Zinc finger protein 784 (Znf784).